We begin with the raw amino-acid sequence, 506 residues long: GTPase Der (506 aa).

EngA-type G domains are found at residues 3-166 and 218-391; these read PVVA…GEQL and IKIA…ACAT. GTP contacts are provided by residues 9–16, 56–60, 118–121, 224–231, 271–275, and 336–339; these read GRPNVGKS, DTGGI, NKTD, DTAGV, and NKWD. In terms of domain architecture, KH-like spans 392 to 476; it reads QKNSTSMLTR…PIRIQFQEGN (85 aa).

Belongs to the TRAFAC class TrmE-Era-EngA-EngB-Septin-like GTPase superfamily. EngA (Der) GTPase family. In terms of assembly, associates with the 50S ribosomal subunit.

Its function is as follows. GTPase that plays an essential role in the late steps of ribosome biogenesis. The chain is GTPase Der from Actinobacillus pleuropneumoniae serotype 7 (strain AP76).